We begin with the raw amino-acid sequence, 200 residues long: NADH-quinone oxidoreductase subunit C (200 aa).

It belongs to the complex I 30 kDa subunit family. As to quaternary structure, NDH-1 is composed of 14 different subunits. Subunits NuoB, C, D, E, F, and G constitute the peripheral sector of the complex.

Its subcellular location is the cell inner membrane. The enzyme catalyses a quinone + NADH + 5 H(+)(in) = a quinol + NAD(+) + 4 H(+)(out). Functionally, NDH-1 shuttles electrons from NADH, via FMN and iron-sulfur (Fe-S) centers, to quinones in the respiratory chain. The immediate electron acceptor for the enzyme in this species is believed to be ubiquinone. Couples the redox reaction to proton translocation (for every two electrons transferred, four hydrogen ions are translocated across the cytoplasmic membrane), and thus conserves the redox energy in a proton gradient. This Paraburkholderia phytofirmans (strain DSM 17436 / LMG 22146 / PsJN) (Burkholderia phytofirmans) protein is NADH-quinone oxidoreductase subunit C.